We begin with the raw amino-acid sequence, 743 residues long: Neutral ceramidase (743 aa).

Residues 1 to 14 (MASKSRRLSGLEIS) are Cytoplasmic-facing. A helical; Signal-anchor for type II membrane protein membrane pass occupies residues 15–35 (LIVLFLLMTAVSVALITVLAL). Residues 36 to 743 (KQESDKKEEV…FKVARSFYYF (708 aa)) lie on the Lumenal side of the membrane. The interval 40-60 (DKKEEVTPEEPSPSVTPPEKP) is disordered. Positions 49–59 (EPSPSVTPPEK) are enriched in pro residues. Zn(2+)-binding residues include H151 and H260. N-linked (GlcNAc...) asparagine glycosylation is present at N265. S312 acts as the Nucleophile in catalysis. 2 cysteine pairs are disulfide-bonded: C320/C334 and C327/C342. N-linked (GlcNAc...) asparagine glycans are attached at residues N331, N389, N398, and N451. C406 and C456 are joined by a disulfide. E498 and Y538 together coordinate Zn(2+). N661 carries N-linked (GlcNAc...) asparagine glycosylation. Ca(2+) is bound by residues D672, S674, and T677. N-linked (GlcNAc...) asparagine glycosylation occurs at N720.

The protein belongs to the neutral ceramidase family. It depends on Zn(2+) as a cofactor. N-glycosylated. In terms of processing, O-glycosylated. In terms of tissue distribution, detected in intestine (at protein level).

Its subcellular location is the cell membrane. It is found in the membrane raft. The protein resides in the membrane. The protein localises to the caveola. It localises to the golgi apparatus membrane. Its subcellular location is the mitochondrion. It is found in the secreted. The protein resides in the extracellular exosome. It catalyses the reaction an N-acylsphing-4-enine + H2O = sphing-4-enine + a fatty acid. The catalysed reaction is N-dodecanoylsphing-4-enine + H2O = dodecanoate + sphing-4-enine. It participates in lipid metabolism; sphingolipid metabolism. Plasma membrane ceramidase that hydrolyzes sphingolipid ceramides into sphingosine and free fatty acids at neutral pH. Ceramides, sphingosine, and its phosphorylated form sphingosine-1-phosphate are bioactive lipids that mediate cellular signaling pathways regulating several biological processes including cell proliferation, apoptosis and differentiation. Also catalyzes the reverse reaction allowing the synthesis of ceramides from fatty acids and sphingosine. Together with sphingomyelinase, participates in the production of sphingosine and sphingosine-1-phosphate from the degradation of sphingomyelin, a sphingolipid enriched in the plasma membrane of cells. Also participates in the hydrolysis of ceramides from the extracellular milieu allowing the production of sphingosine-1-phosphate inside and outside cells. This chain is Neutral ceramidase (asah2), found in Danio rerio (Zebrafish).